Here is a 436-residue protein sequence, read N- to C-terminus: Methylenetetrahydrofolate--tRNA-(uracil-5-)-methyltransferase TrmFO (436 aa).

Position 10–15 (10–15 (GAGLAG)) interacts with FAD.

Belongs to the MnmG family. TrmFO subfamily. The cofactor is FAD.

The protein resides in the cytoplasm. The enzyme catalyses uridine(54) in tRNA + (6R)-5,10-methylene-5,6,7,8-tetrahydrofolate + NADH + H(+) = 5-methyluridine(54) in tRNA + (6S)-5,6,7,8-tetrahydrofolate + NAD(+). It carries out the reaction uridine(54) in tRNA + (6R)-5,10-methylene-5,6,7,8-tetrahydrofolate + NADPH + H(+) = 5-methyluridine(54) in tRNA + (6S)-5,6,7,8-tetrahydrofolate + NADP(+). In terms of biological role, catalyzes the folate-dependent formation of 5-methyl-uridine at position 54 (M-5-U54) in all tRNAs. The protein is Methylenetetrahydrofolate--tRNA-(uracil-5-)-methyltransferase TrmFO of Exiguobacterium sp. (strain ATCC BAA-1283 / AT1b).